Here is a 159-residue protein sequence, read N- to C-terminus: Protein-export protein SecB (159 aa).

Belongs to the SecB family. As to quaternary structure, homotetramer, a dimer of dimers. One homotetramer interacts with 1 SecA dimer.

Its subcellular location is the cytoplasm. In terms of biological role, one of the proteins required for the normal export of preproteins out of the cell cytoplasm. It is a molecular chaperone that binds to a subset of precursor proteins, maintaining them in a translocation-competent state. It also specifically binds to its receptor SecA. The sequence is that of Protein-export protein SecB from Aromatoleum aromaticum (strain DSM 19018 / LMG 30748 / EbN1) (Azoarcus sp. (strain EbN1)).